A 1132-amino-acid polypeptide reads, in one-letter code: MGMACLTMTEMEGTSTSSIYQNGDISGNANSMKQIDPVLLVYLYHSLGKSEADYLTFPSGEYVAEEICIAASKACGITPVYHNMFALMSETERIWYPPNHVFHIDESTRHNVLYRIRFYFPRWYCSGSNRAYRHGISRGAEAPLLDDFVMSYLFAQWRHDFVHGWIKVPVTHETQEECLGMAVLDMMRIAKENDQTPLAIYNSISYKTFLPKCIRAKIQDYHILTRKRIRYRFRRFIQQFSQCKATARNLKLKYLINLETLQSAFYTEKFEVKEPGSGPSGEEIFATIIITGNGGIQWSRGKHKESETLTEQDLQLYCDFPNIIDVSIKQANQEGSNESRVVTIHKQDGKNLEIELSSLREALSFVSLIDGYYRLTADAHHYLCKEVAPPTVLENIQSNCHGPISMDFAISKLKKAGNQTGLYVLRCSPKDFNKYFLTFAVERENVIEYKHCLITKNENEEYNLSGTKKNFSSLKDLLNCYQMETVRSDNIIFQFTKCCPPKPKDKSNLLVFRTNGVSDVPTSPTLQRPTHMNQMVFHKIRNEDLIFNESLGQGTFTKIFKGVRREVGDYGQLHETEVLLKVLDKAHRNYSESFFEAASMMSKLSHKHLVLNYGVCVCGDENILVQEFVKFGSLDTYLKKNKNCINILWKLEVAKQLAWAMHFLEENTLIHGNVCAKNILLIREEDRKTGNPPFIKLSDPGISITVLPKDILQERIPWVPPECIENPKNLNLATDKWSFGTTLWEICSGGDKPLSALDSQRKLQFYEDRHQLPAPKWAELANLINNCMDYEPDFRPSFRAIIRDLNSLFTPDYELLTENDMLPNMRIGALGFSGAFEDRDPTQFEERHLKFLQQLGKGNFGSVEMCRYDPLQDNTGEVVAVKKLQHSTEEHLRDFEREIEILKSLQHDNIVKYKGVCYSAGRRNLKLIMEYLPYGSLRDYLQKHKERIDHKKLLQYTSQICKGMEYLGTKRYIHRDLATRNILVENENRVKIGDFGLTKVLPQDKEYYKVKEPGESPIFWYAPESLTESKFSVASDVWSFGVVLYELFTYIEKSKSPPAEFMRMIGNDKQGQMIVFHLIELLKNNGRLPRPDGCPDEIYMIMTECWNNNVNQRPSFRDLALRVDQIRDNMAG.

The interaction with cytokine/interferon/growth hormone receptors stretch occupies residues 1 to 239; it reads MGMACLTMTE…RYRFRRFIQQ (239 aa). An FERM domain is found at 37–380; the sequence is PVLLVYLYHS…GYYRLTADAH (344 aa). The residue at position 119 (Tyr119) is a Phosphotyrosine; by autocatalysis. Tyr372 and Tyr373 each carry phosphotyrosine. Positions 401–482 constitute an SH2; atypical domain; sequence HGPISMDFAI…SLKDLLNCYQ (82 aa). Phosphoserine is present on Ser523. The 265-residue stretch at 545 to 809 folds into the Protein kinase 1 domain; the sequence is LIFNESLGQG…AIIRDLNSLF (265 aa). 2 positions are modified to phosphotyrosine: Tyr570 and Tyr813. Residues 849–1126 form the Protein kinase 2 domain; that stretch reads LKFLQQLGKG…RDLALRVDQI (278 aa). 855–863 lines the ATP pocket; that stretch reads LGKGNFGSV. A Phosphotyrosine; by autocatalysis modification is found at Tyr868. Lys882 contributes to the ATP binding site. Phosphotyrosine; by autocatalysis occurs at positions 966 and 972. Residue Asp976 is the Proton acceptor of the active site. A phosphotyrosine; by autocatalysis mark is found at Tyr1007 and Tyr1008.

It belongs to the protein kinase superfamily. Tyr protein kinase family. JAK subfamily. In terms of assembly, interacts with IL23R, SKB1 and STAM2. Interacts with EPOR. Interacts with LYN. Interacts with SIRPA. Interacts with SH2B1. Interacts with TEC. Interacts with IFNGR2 (via intracellular domain). Interacts with LEPR (Isoform B). Interacts with HSP90AB1; promotes functional activation in a heat shock-dependent manner. Interacts with STRA6. Interacts with RHEX; this interaction occurs in a erythropoietin (EPO)-dependent manner. Interacts with ASB2; the interaction targets JAK2 for Notch-induced proteasomal degradation. Mg(2+) is required as a cofactor. Autophosphorylated, leading to regulate its activity. Leptin promotes phosphorylation on tyrosine residues, including phosphorylation on Tyr-813. Autophosphorylation on Tyr-119 in response to EPO down-regulates its kinase activity. Autophosphorylation on Tyr-868, Tyr-966 and Tyr-972 in response to growth hormone (GH) are required for maximal kinase activity. Also phosphorylated by TEC. Phosphorylated on tyrosine residues in response to interferon gamma signaling. Phosphorylated on tyrosine residues in response to a signaling cascade that is activated by increased cellular retinol. Post-translationally, undergoes Notch-induced ubiquitination and subsequent proteasomal degradation which is mediated by ASB1 or ASB2, the substrate-recognition components of probable ECS E3 ubiquitin-protein ligase complexes.

It is found in the endomembrane system. Its subcellular location is the cytoplasm. The protein resides in the nucleus. The catalysed reaction is L-tyrosyl-[protein] + ATP = O-phospho-L-tyrosyl-[protein] + ADP + H(+). Its activity is regulated as follows. Regulated by autophosphorylation, can both activate or decrease activity. Heme regulates its activity by enhancing the phosphorylation on Tyr-1007 and Tyr-1008. Non-receptor tyrosine kinase involved in various processes such as cell growth, development, differentiation or histone modifications. Mediates essential signaling events in both innate and adaptive immunity. In the cytoplasm, plays a pivotal role in signal transduction via its association with type I receptors such as growth hormone (GHR), prolactin (PRLR), leptin (LEPR), erythropoietin (EPOR), thrombopoietin (THPO); or type II receptors including IFN-alpha, IFN-beta, IFN-gamma and multiple interleukins. Following ligand-binding to cell surface receptors, phosphorylates specific tyrosine residues on the cytoplasmic tails of the receptor, creating docking sites for STATs proteins. Subsequently, phosphorylates the STATs proteins once they are recruited to the receptor. Phosphorylated STATs then form homodimer or heterodimers and translocate to the nucleus to activate gene transcription. For example, cell stimulation with erythropoietin (EPO) during erythropoiesis leads to JAK2 autophosphorylation, activation, and its association with erythropoietin receptor (EPOR) that becomes phosphorylated in its cytoplasmic domain. Then, STAT5 (STAT5A or STAT5B) is recruited, phosphorylated and activated by JAK2. Once activated, dimerized STAT5 translocates into the nucleus and promotes the transcription of several essential genes involved in the modulation of erythropoiesis. Part of a signaling cascade that is activated by increased cellular retinol and that leads to the activation of STAT5 (STAT5A or STAT5B). In addition, JAK2 mediates angiotensin-2-induced ARHGEF1 phosphorylation. Plays a role in cell cycle by phosphorylating CDKN1B. Cooperates with TEC through reciprocal phosphorylation to mediate cytokine-driven activation of FOS transcription. In the nucleus, plays a key role in chromatin by specifically mediating phosphorylation of 'Tyr-41' of histone H3 (H3Y41ph), a specific tag that promotes exclusion of CBX5 (HP1 alpha) from chromatin. Up-regulates the potassium voltage-gated channel activity of KCNA3. The sequence is that of Tyrosine-protein kinase JAK2 from Pongo abelii (Sumatran orangutan).